Consider the following 760-residue polypeptide: Probable ATP-dependent RNA helicase DDX27 (760 aa).

The interval Met1–Asp50 is disordered. Residues Glu13–Gly32 are compositionally biased toward acidic residues. Ser23, Ser25, and Ser48 each carry phosphoserine. The Required for interaction with the PEBOW complex motif lies at Phe55–Phe57. The tract at residues Lys80–Ile149 is disordered. Basic and acidic residues predominate over residues Lys98–Gly122. Over residues Pro126–Glu148 the composition is skewed to acidic residues. Phosphoserine is present on residues Ser133 and Ser144. The short motif at Lys157–Lys166 is the Nuclear localization signal element. A Q motif motif is present at residues Leu184–Lys212. Positions Ile215 to Ile389 constitute a Helicase ATP-binding domain. Position 228–235 (Ala228–Thr235) interacts with ATP. A DEAD box motif is present at residues Asp337 to Asp340. The 151-residue stretch at Ile419–Ile569 folds into the Helicase C-terminal domain. Disordered regions lie at residues Lys605–Glu624 and Arg679–Lys760. Composition is skewed to basic residues over residues Lys682 to Arg691 and Arg744 to Lys760.

Belongs to the DEAD box helicase family. DDX27/DRS1 subfamily. Associates with PeBoW complex, composed of BOP1, PES1 and WDR12. Interacts directly with BOP1 and PES1.

The protein resides in the nucleus. It is found in the nucleolus. It localises to the chromosome. The enzyme catalyses ATP + H2O = ADP + phosphate + H(+). Functionally, probable ATP-dependent RNA helicase. Component of the nucleolar ribosomal RNA (rRNA) processing machinery that regulates 3' end formation of ribosomal 47S rRNA. This is Probable ATP-dependent RNA helicase DDX27 (Ddx27) from Mus musculus (Mouse).